The following is a 325-amino-acid chain: Putative ankyrin repeat protein RF_0011 (325 aa).

ANK repeat units lie at residues 63-94 (NGNT…AINM), 99-130 (RGQP…NINA), and 134-164 (CGRT…EMII).

This Rickettsia felis (strain ATCC VR-1525 / URRWXCal2) (Rickettsia azadi) protein is Putative ankyrin repeat protein RF_0011.